The chain runs to 68 residues: Disintegrin EMS11A (68 aa).

In terms of domain architecture, Disintegrin spans 1 to 65; the sequence is NSAHPCCDPV…DCPRNRYKGK (65 aa). 4 disulfide bridges follow: C6–C29, C20–C26, C25–C50, and C38–C57. Positions 42 to 44 match the Cell attachment site; atypical (MLD) motif; the sequence is MLD.

Belongs to the disintegrin family. Dimeric disintegrin subfamily. As to quaternary structure, heterodimer; disulfide-linked. Expressed by the venom gland.

The protein localises to the secreted. Functionally, poor inhibitor of platelet aggregation. The disintegrin inhibits the adhesion of both the alpha-4/beta-1 (ITGA4/ITGB1) and the alpha-5/beta-1 (ITGA5/ITGB1) integrins to VCAM-1 and fibronectin respectively with almost the same degree of specificity. Inhibition on alpha-IIb/beta-3 (ITGA2B/ITGB3) is low. The protein is Disintegrin EMS11A of Echis multisquamatus (Central Asian sand viper).